A 415-amino-acid chain; its full sequence is Adenylosuccinate synthetase (415 aa).

GTP is bound by residues 12–18 (GDEGKGK) and 40–42 (GHT). The Proton acceptor role is filled by Asp13. Residues Asp13 and Gly40 each contribute to the Mg(2+) site. Residues 13-16 (DEGK), 38-41 (NAGH), Thr125, Arg139, Gln219, Thr234, and Arg298 contribute to the IMP site. The Proton donor role is filled by His41. A substrate-binding site is contributed by 294 to 300 (TTTGRPR). Residues Arg300, 326–328 (KLD), and 404–406 (STG) contribute to the GTP site.

It belongs to the adenylosuccinate synthetase family. In terms of assembly, homodimer. Requires Mg(2+) as cofactor.

The protein localises to the cytoplasm. It carries out the reaction IMP + L-aspartate + GTP = N(6)-(1,2-dicarboxyethyl)-AMP + GDP + phosphate + 2 H(+). It participates in purine metabolism; AMP biosynthesis via de novo pathway; AMP from IMP: step 1/2. Its function is as follows. Plays an important role in the de novo pathway of purine nucleotide biosynthesis. Catalyzes the first committed step in the biosynthesis of AMP from IMP. The polypeptide is Adenylosuccinate synthetase (Wolinella succinogenes (strain ATCC 29543 / DSM 1740 / CCUG 13145 / JCM 31913 / LMG 7466 / NCTC 11488 / FDC 602W) (Vibrio succinogenes)).